A 432-amino-acid chain; its full sequence is Adenylosuccinate synthetase (432 aa).

GTP contacts are provided by residues 12 to 18 and 40 to 42; these read GDEGKGK and GHT. Aspartate 13 serves as the catalytic Proton acceptor. Mg(2+) contacts are provided by aspartate 13 and glycine 40. IMP is bound by residues 13 to 16, 38 to 41, threonine 128, arginine 142, glutamine 223, threonine 238, and arginine 302; these read DEGK and NAGH. The active-site Proton donor is histidine 41. A substrate-binding site is contributed by 298–304; that stretch reads TTTGRPR. Residues arginine 304, 330–332, and 417–419 contribute to the GTP site; these read HLD and GVG.

Belongs to the adenylosuccinate synthetase family. Homodimer. Mg(2+) is required as a cofactor.

The protein localises to the cytoplasm. It catalyses the reaction IMP + L-aspartate + GTP = N(6)-(1,2-dicarboxyethyl)-AMP + GDP + phosphate + 2 H(+). It participates in purine metabolism; AMP biosynthesis via de novo pathway; AMP from IMP: step 1/2. Functionally, plays an important role in the de novo pathway of purine nucleotide biosynthesis. Catalyzes the first committed step in the biosynthesis of AMP from IMP. The protein is Adenylosuccinate synthetase of Symbiobacterium thermophilum (strain DSM 24528 / JCM 14929 / IAM 14863 / T).